The sequence spans 293 residues: Outer membrane protein assembly factor BamD (293 aa).

Residues 1-26 (MIQRPTFFSPIHLLAVLLATFILITG) form the signal peptide. A lipid anchor (N-palmitoyl cysteine) is attached at C27. C27 carries the S-diacylglycerol cysteine lipid modification.

This sequence belongs to the BamD family. Part of the Bam complex.

The protein localises to the cell outer membrane. Functionally, part of the outer membrane protein assembly complex, which is involved in assembly and insertion of beta-barrel proteins into the outer membrane. This is Outer membrane protein assembly factor BamD from Xylella fastidiosa (strain Temecula1 / ATCC 700964).